A 440-amino-acid polypeptide reads, in one-letter code: Ribosomal protein uS12 methylthiotransferase RimO (440 aa).

The region spanning 2 to 118 is the MTTase N-terminal domain; the sequence is KKAGIIHLGC…FVSLITSNGE (117 aa). [4Fe-4S] cluster-binding residues include cysteine 11, cysteine 47, cysteine 81, cysteine 154, cysteine 158, and cysteine 161. The 231-residue stretch at 140 to 370 folds into the Radical SAM core domain; sequence ISPNFWVYVK…MSTQKEISKK (231 aa). A TRAM domain is found at 373 to 440; the sequence is AKLLGREFDV…RAYDLLGELV (68 aa).

The protein belongs to the methylthiotransferase family. RimO subfamily. [4Fe-4S] cluster is required as a cofactor.

It localises to the cytoplasm. It carries out the reaction L-aspartate(89)-[ribosomal protein uS12]-hydrogen + (sulfur carrier)-SH + AH2 + 2 S-adenosyl-L-methionine = 3-methylsulfanyl-L-aspartate(89)-[ribosomal protein uS12]-hydrogen + (sulfur carrier)-H + 5'-deoxyadenosine + L-methionine + A + S-adenosyl-L-homocysteine + 2 H(+). Its function is as follows. Catalyzes the methylthiolation of an aspartic acid residue of ribosomal protein uS12. The protein is Ribosomal protein uS12 methylthiotransferase RimO of Dictyoglomus thermophilum (strain ATCC 35947 / DSM 3960 / H-6-12).